A 205-amino-acid polypeptide reads, in one-letter code: Holliday junction branch migration complex subunit RuvA (205 aa).

Residues 1–64 (MIGRIRGLLV…EDAQLLYGFI (64 aa)) form a domain I region. Residues 65-143 (SKQERALFRL…SLMEASVGSE (79 aa)) are domain II. Positions 144-156 (REFMLQSNYTAPV) are flexible linker. The tract at residues 157–205 (VANTAEEDAIAALLSLGYKPAQASKAVSAVYVDGIDSESLIKSALKSML) is domain III.

The protein belongs to the RuvA family. Homotetramer. Forms an RuvA(8)-RuvB(12)-Holliday junction (HJ) complex. HJ DNA is sandwiched between 2 RuvA tetramers; dsDNA enters through RuvA and exits via RuvB. An RuvB hexamer assembles on each DNA strand where it exits the tetramer. Each RuvB hexamer is contacted by two RuvA subunits (via domain III) on 2 adjacent RuvB subunits; this complex drives branch migration. In the full resolvosome a probable DNA-RuvA(4)-RuvB(12)-RuvC(2) complex forms which resolves the HJ.

The protein resides in the cytoplasm. The RuvA-RuvB-RuvC complex processes Holliday junction (HJ) DNA during genetic recombination and DNA repair, while the RuvA-RuvB complex plays an important role in the rescue of blocked DNA replication forks via replication fork reversal (RFR). RuvA specifically binds to HJ cruciform DNA, conferring on it an open structure. The RuvB hexamer acts as an ATP-dependent pump, pulling dsDNA into and through the RuvAB complex. HJ branch migration allows RuvC to scan DNA until it finds its consensus sequence, where it cleaves and resolves the cruciform DNA. In Shewanella piezotolerans (strain WP3 / JCM 13877), this protein is Holliday junction branch migration complex subunit RuvA.